The chain runs to 874 residues: Alanine--tRNA ligase (874 aa).

Zn(2+)-binding residues include H565, H569, C666, and H670.

The protein belongs to the class-II aminoacyl-tRNA synthetase family. Zn(2+) is required as a cofactor.

The protein localises to the cytoplasm. It carries out the reaction tRNA(Ala) + L-alanine + ATP = L-alanyl-tRNA(Ala) + AMP + diphosphate. Its function is as follows. Catalyzes the attachment of alanine to tRNA(Ala) in a two-step reaction: alanine is first activated by ATP to form Ala-AMP and then transferred to the acceptor end of tRNA(Ala). Also edits incorrectly charged Ser-tRNA(Ala) and Gly-tRNA(Ala) via its editing domain. The polypeptide is Alanine--tRNA ligase (Polynucleobacter asymbioticus (strain DSM 18221 / CIP 109841 / QLW-P1DMWA-1) (Polynucleobacter necessarius subsp. asymbioticus)).